The following is a 129-amino-acid chain: MAKPAARTRKKVKKTVVDGIAHIHASFNNTIVTITDRQGNALSWATSGGSGFRGSRKSTPFAAQIAAERAGQAALEYGLKNLDVNVKGPGPGRESAVRALNACGYKIASITDVTPIPHNGCRPPKKRRV.

It belongs to the universal ribosomal protein uS11 family. In terms of assembly, part of the 30S ribosomal subunit. Interacts with proteins S7 and S18. Binds to IF-3.

Its function is as follows. Located on the platform of the 30S subunit, it bridges several disparate RNA helices of the 16S rRNA. Forms part of the Shine-Dalgarno cleft in the 70S ribosome. The sequence is that of Small ribosomal subunit protein uS11 from Ectopseudomonas mendocina (strain ymp) (Pseudomonas mendocina).